The primary structure comprises 59 residues: Large ribosomal subunit protein uL30 (59 aa).

This sequence belongs to the universal ribosomal protein uL30 family. As to quaternary structure, part of the 50S ribosomal subunit.

The chain is Large ribosomal subunit protein uL30 from Photobacterium profundum (strain SS9).